We begin with the raw amino-acid sequence, 226 residues long: Large ribosomal subunit protein uL3 (226 aa).

The disordered stretch occupies residues 136-162 (NFGSQRASHGNSRSHNVPGSISMAQDP). Residues 137–158 (FGSQRASHGNSRSHNVPGSISM) show a composition bias toward polar residues. The residue at position 160 (Gln-160) is an N5-methylglutamine.

The protein belongs to the universal ribosomal protein uL3 family. In terms of assembly, part of the 50S ribosomal subunit. Forms a cluster with proteins L14 and L19. In terms of processing, methylated by PrmB.

Its function is as follows. One of the primary rRNA binding proteins, it binds directly near the 3'-end of the 23S rRNA, where it nucleates assembly of the 50S subunit. This chain is Large ribosomal subunit protein uL3, found in Methylibium petroleiphilum (strain ATCC BAA-1232 / LMG 22953 / PM1).